The sequence spans 301 residues: tRNA-cytidine(32) 2-sulfurtransferase (301 aa).

Residues 47 to 52 (SGGKDS) carry the PP-loop motif motif. 3 residues coordinate [4Fe-4S] cluster: cysteine 122, cysteine 125, and cysteine 213.

Belongs to the TtcA family. In terms of assembly, homodimer. Mg(2+) serves as cofactor. Requires [4Fe-4S] cluster as cofactor.

It is found in the cytoplasm. It carries out the reaction cytidine(32) in tRNA + S-sulfanyl-L-cysteinyl-[cysteine desulfurase] + AH2 + ATP = 2-thiocytidine(32) in tRNA + L-cysteinyl-[cysteine desulfurase] + A + AMP + diphosphate + H(+). Its pathway is tRNA modification. In terms of biological role, catalyzes the ATP-dependent 2-thiolation of cytidine in position 32 of tRNA, to form 2-thiocytidine (s(2)C32). The sulfur atoms are provided by the cysteine/cysteine desulfurase (IscS) system. This Photobacterium profundum (strain SS9) protein is tRNA-cytidine(32) 2-sulfurtransferase.